A 353-amino-acid polypeptide reads, in one-letter code: Photosystem II D2 protein (353 aa).

The residue at position 2 (T2) is an N-acetylthreonine. T2 carries the post-translational modification Phosphothreonine. The helical transmembrane segment at 41–61 (CAYFAVGGWFTGTTFVTSWYT) threads the bilayer. Residue H118 participates in chlorophyll a binding. The chain crosses the membrane as a helical span at residues 125 to 141 (GFMLRQFELARSVQLRP). Residues Q130 and N143 each contribute to the pheophytin a site. A helical membrane pass occupies residues 153–166 (VFVSVFLIYPLGQS). H198 contacts chlorophyll a. The chain crosses the membrane as a helical span at residues 208 to 228 (AALLCAIHGATVENTLFEDGD). A plastoquinone-binding residues include H215 and F262. A Fe cation-binding site is contributed by H215. H269 is a Fe cation binding site. Residues 279–295 (GLWMSALGVVGLALNLR) form a helical membrane-spanning segment.

Belongs to the reaction center PufL/M/PsbA/D family. PSII is composed of 1 copy each of membrane proteins PsbA, PsbB, PsbC, PsbD, PsbE, PsbF, PsbH, PsbI, PsbJ, PsbK, PsbL, PsbM, PsbT, PsbX, PsbY, PsbZ, Psb30/Ycf12, at least 3 peripheral proteins of the oxygen-evolving complex and a large number of cofactors. It forms dimeric complexes. The D1/D2 heterodimer binds P680, chlorophylls that are the primary electron donor of PSII, and subsequent electron acceptors. It shares a non-heme iron and each subunit binds pheophytin, quinone, additional chlorophylls, carotenoids and lipids. There is also a Cl(-1) ion associated with D1 and D2, which is required for oxygen evolution. The PSII complex binds additional chlorophylls, carotenoids and specific lipids. serves as cofactor.

Its subcellular location is the plastid. The protein resides in the chloroplast thylakoid membrane. It catalyses the reaction 2 a plastoquinone + 4 hnu + 2 H2O = 2 a plastoquinol + O2. Functionally, photosystem II (PSII) is a light-driven water:plastoquinone oxidoreductase that uses light energy to abstract electrons from H(2)O, generating O(2) and a proton gradient subsequently used for ATP formation. It consists of a core antenna complex that captures photons, and an electron transfer chain that converts photonic excitation into a charge separation. The D1/D2 (PsbA/PsbD) reaction center heterodimer binds P680, the primary electron donor of PSII as well as several subsequent electron acceptors. D2 is needed for assembly of a stable PSII complex. In Cucumis sativus (Cucumber), this protein is Photosystem II D2 protein.